The primary structure comprises 307 residues: Thymidylate synthase (307 aa).

Residues Arg26 and 160-161 (RR) contribute to the dUMP site. The active-site Nucleophile is the Cys180. Residues 209–212 (RSCD), Asn220, and 250–252 (HIY) each bind dUMP. Asp212 lines the (6R)-5,10-methylene-5,6,7,8-tetrahydrofolate pocket. Residue Ala306 participates in (6R)-5,10-methylene-5,6,7,8-tetrahydrofolate binding.

This sequence belongs to the thymidylate synthase family. Bacterial-type ThyA subfamily. As to quaternary structure, homodimer.

It localises to the cytoplasm. It carries out the reaction dUMP + (6R)-5,10-methylene-5,6,7,8-tetrahydrofolate = 7,8-dihydrofolate + dTMP. It functions in the pathway pyrimidine metabolism; dTTP biosynthesis. In terms of biological role, catalyzes the reductive methylation of 2'-deoxyuridine-5'-monophosphate (dUMP) to 2'-deoxythymidine-5'-monophosphate (dTMP) while utilizing 5,10-methylenetetrahydrofolate (mTHF) as the methyl donor and reductant in the reaction, yielding dihydrofolate (DHF) as a by-product. This enzymatic reaction provides an intracellular de novo source of dTMP, an essential precursor for DNA biosynthesis. This is Thymidylate synthase from Rhizobium rhizogenes (strain K84 / ATCC BAA-868) (Agrobacterium radiobacter).